Reading from the N-terminus, the 25-residue chain is QGCCGEPNLCFTRWCRNNARCCRQQ.

A Pyrrolidone carboxylic acid; partial modification is found at Gln-1. 3 disulfides stabilise this stretch: Cys-3/Cys-15, Cys-4/Cys-21, and Cys-10/Cys-22.

It belongs to the conotoxin M superfamily. Expressed by the venom duct.

Its subcellular location is the secreted. In terms of biological role, mu-conotoxins block voltage-gated sodium channels (Nav). This synthetic toxin blocks slightly but irreversibly tetrodotoxin-resistant VGSCs. This is Mu-conotoxin CnIIIB from Conus consors (Singed cone).